Reading from the N-terminus, the 398-residue chain is Argininosuccinate synthase (398 aa).

ATP-binding positions include 9–17 and A36; that span reads AYSGGLDTS. L-citrulline-binding residues include Y87 and S92. G117 contacts ATP. Positions 119, 123, and 124 each coordinate L-aspartate. Position 123 (N123) interacts with L-citrulline. The L-citrulline site is built by R127, S176, S185, E261, and Y273.

This sequence belongs to the argininosuccinate synthase family. Type 1 subfamily. As to quaternary structure, homotetramer.

Its subcellular location is the cytoplasm. The enzyme catalyses L-citrulline + L-aspartate + ATP = 2-(N(omega)-L-arginino)succinate + AMP + diphosphate + H(+). It participates in amino-acid biosynthesis; L-arginine biosynthesis; L-arginine from L-ornithine and carbamoyl phosphate: step 2/3. This chain is Argininosuccinate synthase, found in Desulfotalea psychrophila (strain LSv54 / DSM 12343).